Reading from the N-terminus, the 526-residue chain is pH-sensitive chloride channel 2 (526 aa).

The first 18 residues, methionine 1 to alanine 18, serve as a signal peptide directing secretion. Residues alanine 19–tyrosine 300 are Extracellular-facing. 8 N-linked (GlcNAc...) asparagine glycosylation sites follow: asparagine 33, asparagine 42, asparagine 52, asparagine 192, asparagine 231, asparagine 264, asparagine 271, and asparagine 283. A helical membrane pass occupies residues valine 301–leucine 321. The Cytoplasmic segment spans residues glutamine 322 to proline 327. Residues alanine 328 to glutamine 347 traverse the membrane as a helical segment. Over glutamate 348–serine 360 the chain is Extracellular. The helical transmembrane segment at glutamate 361 to valine 381 threads the bilayer. Over asparagine 382–arginine 505 the chain is Cytoplasmic. The interval isoleucine 463–phenylalanine 488 is disordered. The chain crosses the membrane as a helical span at residues phenylalanine 506–leucine 526.

This sequence belongs to the ligand-gated ion channel (TC 1.A.9) family. In terms of tissue distribution, in third-instar larvae, expressed in the principal cells of the excretory Malpighian tubules (at protein level). Also detected in the enterocytes of the copper cell region and the iron cell region of the larval midgut (at protein level). In the copper cell region expression is confined to the interstitial cells and in the iron cell region it is expressed in the anterior portion (at protein level). Expressed in the Malpighian tubules and the middle midgut of third instar larvae and adults.

It is found in the apical cell membrane. The protein resides in the cell projection. The protein localises to the microvillus membrane. Its subcellular location is the late endosome membrane. It localises to the lysosome membrane. The enzyme catalyses chloride(in) = chloride(out). Its function is as follows. Ligand and pH-gated channel that mediates chloride transport primarily in the mid-gut and thereby functions in larval metabolism and fluid homeostasis. Channel opening is triggered by zinc binding or, to a lesser extent, an increase in extracellular pH. Zinc-dependent activity in the mid-gut is required for modulating Tor-dependent metabolic programs that promote larval feeding and systematic growth. It may therefore act as an intestinal zinc sensor that mediates larval growth and metabolism in response to micronutrient availability. Activates Tor signaling via its activity in maintaining lysosome homeostasis in interstitial cells and/or by its role in activating the release of insulin-like peptides in the brain after feeding, via an unknown mechanism. Functions in lysosome homeostasis by regulating chloride transport into enterocyte lysosomes to sustain V-ATPase function which maintains lysosomal acidification and consequently promotes Tor activation at the lysosome membrane. Also appears to play a role in regulating fluid secretion and osmotic homeostasis in Malpighian tubules in response to the pH of extracellular urine. This function is important for proper urine production during diuresis. The sequence is that of pH-sensitive chloride channel 2 from Drosophila melanogaster (Fruit fly).